We begin with the raw amino-acid sequence, 607 residues long: WD repeat-containing protein 1-B (607 aa).

13 WD repeats span residues 4-45 (EIKK…IRNI), 48-87 (PAIADIYTEHAHQVVVARYAPSGFYIASGDTSGKLRIWDT), 93-135 (LLKY…LWDT), 138-176 (SVGEIIGNIKVINSVDIKQTRPYRLVTGSDDNCCAFFEG), 180-218 (KFKFTMSDHSRFVNCVRFSPDGSRLASAGADGQIFLYDG), 224-263 (VCSLGGSKAHDGGIYAVSWSPDGTQLLSASGDKTAKIWDV), 270-306 (TTFNLGSDVLDQQLGCLWQKDYLLSVSLSGYINYLDK), 311-351 (KPFR…YWDA), 358-408 (TFTG…KMDV), 432-474 (LKDK…LYSI), 480-518 (KDEGKTLPAKGAVTDLAYSPDGAFLAVTDANKVVTVFSV), 523-561 (SEHNSYYGHHAKALSVAWSPDNEHFASSGMDMMVYVWTL), and 566-604 (TRIKMPDAHRLHHVSSLAWLDENTLATVSHDACVKQWTV).

The protein belongs to the WD repeat AIP1 family.

Its subcellular location is the cell membrane. The protein resides in the cytoplasm. It localises to the cytoskeleton. The protein localises to the nucleus. In terms of biological role, induces disassembly of actin filaments in conjunction with ADF/cofilin family proteins. Doesn't sever actin filaments alone, but caps the barbed ends of filaments severed by cofilin, which blocks annealing and depolymerization and allows more extensive severing by cofilin. The sequence is that of WD repeat-containing protein 1-B (wdr1-b) from Xenopus laevis (African clawed frog).